We begin with the raw amino-acid sequence, 1114 residues long: WD repeat-containing protein 72 (1114 aa).

WD repeat units follow at residues 15-54 (APPH…KISA), 60-102 (GHSA…CVEK), 160-197 (KCMC…NSIQ), 327-373 (EENK…SKFD), 413-452 (GMTA…KAGL), 470-515 (GHHQ…ILHT), and 566-605 (KHLF…LERH). Disordered regions lie at residues 634–658 (SETH…VPCP) and 749–798 (SLQT…PPRK). The segment covering 780 to 796 (KRQKKMKSSKKAHPKPP) has biased composition (basic residues). Phosphoserine occurs at positions 1093 and 1095.

Expressed in maturation stage ameloblasts (at protein level).

Its subcellular location is the cytoplasmic vesicle. Functionally, plays a major role in formation of tooth enamel. Specifically required during the maturation phase of amelogenesis for normal formation of the enamel matrix and clearance of enamel proteins. May be involved in localization of the calcium transporter SLC24A4 to the ameloblast cell membrane. The polypeptide is WD repeat-containing protein 72 (Mus musculus (Mouse)).